Reading from the N-terminus, the 82-residue chain is MSYRRGSGPSEEEMIMQQMMIKLSMGISGQCFKECVTSFSSGQMVPQEATCIQSCAKRQQSAFMAMNDIQGQLQAKQGAGMF.

The polypeptide is Protein C2 (C2) (Sterkiella nova (Ciliate)).